The following is a 443-amino-acid chain: Oxygen-dependent coproporphyrinogen-III oxidase, mitochondrial (443 aa).

The N-terminal 98 residues, 1-98, are a transit peptide targeting the mitochondrion; it reads MALRLGQLGS…EMVPKSSGAR (98 aa). Positions 90–111 are disordered; the sequence is MVPKSSGARSPSPGRLEEDGDE. S101 carries the phosphoserine modification. The tract at residues 182–191 is important for dimerization; the sequence is VLQDGRVFEK. Residue S233 coordinates coproporphyrinogen III. H247 acts as the Proton donor in catalysis. 249–251 serves as a coordination point for coproporphyrinogen III; sequence NYR. An important for dimerization region spans residues 381-417; it reads YVEFNLVYDRGTKFGLFTPGSRIESILMSLPLTARWE. At K393 the chain carries N6-acetyllysine; alternate. At K393 the chain carries N6-succinyllysine; alternate. 400 to 402 provides a ligand contact to coproporphyrinogen III; sequence GSR.

It belongs to the aerobic coproporphyrinogen-III oxidase family. Homodimer.

The protein resides in the mitochondrion intermembrane space. It catalyses the reaction coproporphyrinogen III + O2 + 2 H(+) = protoporphyrinogen IX + 2 CO2 + 2 H2O. It participates in porphyrin-containing compound metabolism; protoporphyrin-IX biosynthesis; protoporphyrinogen-IX from coproporphyrinogen-III (O2 route): step 1/1. In terms of biological role, involved in the heme biosynthesis. Catalyzes the aerobic oxidative decarboxylation of propionate groups of rings A and B of coproporphyrinogen-III to yield the vinyl groups in protoporphyrinogen-IX. This Rattus norvegicus (Rat) protein is Oxygen-dependent coproporphyrinogen-III oxidase, mitochondrial.